The primary structure comprises 326 residues: Bifunctional pinoresinol-lariciresinol reductase (326 aa).

Residues 25–31 (GGTGYLG), Arg-50, and Lys-59 contribute to the NADP(+) site. The active-site Proton acceptor is the Lys-153. Arg-157 is a binding site for NADP(+). Position 285 (His-285) interacts with substrate.

The protein belongs to the NmrA-type oxidoreductase family. Isoflavone reductase subfamily. In terms of assembly, dimer.

It carries out the reaction (+)-lariciresinol + NADP(+) = (+)-pinoresinol + NADPH + H(+). It catalyses the reaction (-)-secoisolariciresinol + NADP(+) = (+)-lariciresinol + NADPH + H(+). Its function is as follows. Reductase involved in lignan biosynthesis. Catalyzes the enantioselective conversion of (+)-pinoresinol into (+)-lariciresinol and of (+)-lariciresinol into (-)-secoisolariciresinol. Abstracts the 4R-hydride from the NADPH cofactor during catalysis. This chain is Bifunctional pinoresinol-lariciresinol reductase (PLR1), found in Linum album (Flax).